A 109-amino-acid chain; its full sequence is Large ribosomal subunit protein eL30A (109 aa).

Belongs to the eukaryotic ribosomal protein eL30 family. In terms of assembly, component of the large ribosomal subunit (LSU). Mature yeast ribosomes consist of a small (40S) and a large (60S) subunit. The 40S small subunit contains 1 molecule of ribosomal RNA (18S rRNA) and at least 33 different proteins. The large 60S subunit contains 3 rRNA molecules (25S, 5.8S and 5S rRNA) and at least 46 different proteins.

The protein localises to the cytoplasm. Component of the ribosome, a large ribonucleoprotein complex responsible for the synthesis of proteins in the cell. The small ribosomal subunit (SSU) binds messenger RNAs (mRNAs) and translates the encoded message by selecting cognate aminoacyl-transfer RNA (tRNA) molecules. The large subunit (LSU) contains the ribosomal catalytic site termed the peptidyl transferase center (PTC), which catalyzes the formation of peptide bonds, thereby polymerizing the amino acids delivered by tRNAs into a polypeptide chain. The nascent polypeptides leave the ribosome through a tunnel in the LSU and interact with protein factors that function in enzymatic processing, targeting, and the membrane insertion of nascent chains at the exit of the ribosomal tunnel. This chain is Large ribosomal subunit protein eL30A (rpl3001), found in Schizosaccharomyces pombe (strain 972 / ATCC 24843) (Fission yeast).